A 452-amino-acid chain; its full sequence is Probable glycine dehydrogenase (decarboxylating) subunit 1 (452 aa).

Belongs to the GcvP family. N-terminal subunit subfamily. As to quaternary structure, the glycine cleavage system is composed of four proteins: P, T, L and H. In this organism, the P 'protein' is a heterodimer of two subunits.

It catalyses the reaction N(6)-[(R)-lipoyl]-L-lysyl-[glycine-cleavage complex H protein] + glycine + H(+) = N(6)-[(R)-S(8)-aminomethyldihydrolipoyl]-L-lysyl-[glycine-cleavage complex H protein] + CO2. The glycine cleavage system catalyzes the degradation of glycine. The P protein binds the alpha-amino group of glycine through its pyridoxal phosphate cofactor; CO(2) is released and the remaining methylamine moiety is then transferred to the lipoamide cofactor of the H protein. This chain is Probable glycine dehydrogenase (decarboxylating) subunit 1, found in Sphingopyxis alaskensis (strain DSM 13593 / LMG 18877 / RB2256) (Sphingomonas alaskensis).